Consider the following 238-residue polypeptide: MNDHKPPIEEFMGLSFNMSTVLMTTIACLIVFLITFIGTRRLSMNPSGLQNFLEWVVDFIRGIIKANMDWKVGGRFIVLAYALLFYVFVANMLGLPFELYNPTTHEVWWKSPTSDPVLTLTMAAFVVILTHYYGIKIQGFGKYLKGYITPVPFLLPFKIIEEFANTLTLGMRLFGNVYAKEILMILLVTAGTSGLIGMFGAFLPLIVWQAFGLFIGAIQAYIFAMLAMVYMAHKVESH.

The next 5 membrane-spanning stretches (helical) occupy residues 18-38, 76-96, 117-137, 195-215, and 216-236; these read MSTV…TFIG, FIVL…LGLP, VLTL…GIKI, LIGM…GLFI, and GAIQ…HKVE.

It belongs to the ATPase A chain family. In terms of assembly, F-type ATPases have 2 components, CF(1) - the catalytic core - and CF(0) - the membrane proton channel. CF(1) has five subunits: alpha(3), beta(3), gamma(1), delta(1), epsilon(1). CF(0) has three main subunits: a(1), b(2) and c(9-12). The alpha and beta chains form an alternating ring which encloses part of the gamma chain. CF(1) is attached to CF(0) by a central stalk formed by the gamma and epsilon chains, while a peripheral stalk is formed by the delta and b chains.

It localises to the cell membrane. In terms of biological role, key component of the proton channel; it plays a direct role in the translocation of protons across the membrane. This is ATP synthase subunit a from Alkalihalophilus pseudofirmus (strain ATCC BAA-2126 / JCM 17055 / OF4) (Bacillus pseudofirmus).